Here is a 242-residue protein sequence, read N- to C-terminus: Probable ABC transporter ATP-binding protein PEB1C (242 aa).

The ABC transporter domain maps to 2–236 (IELKNVNKYY…PKTERARLFL (235 aa)). An ATP-binding site is contributed by 34–41 (GPSGSGKS).

This sequence belongs to the ABC transporter superfamily.

The protein resides in the cell inner membrane. Its function is as follows. Most probably involved, with PEB1, in a binding-protein-dependent transport system for an amino acid. Probably responsible for energy coupling to the transport system. In Campylobacter jejuni subsp. jejuni serotype O:23/36 (strain 81-176), this protein is Probable ABC transporter ATP-binding protein PEB1C (peb1C).